We begin with the raw amino-acid sequence, 45 residues long: Psychimicin (45 aa).

3 cysteine pairs are disulfide-bonded: C10-C24, C14-C36, and C25-C42.

As to quaternary structure, monomer. In terms of tissue distribution, hemolymph.

The protein resides in the secreted. In terms of biological role, has antimicrobial activity. Is particularly active against fungi, and to a lesser extent against Gram-positive and Gram-negative bacteria. In Oiketicus kirbyi (Bagworm moth), this protein is Psychimicin.